We begin with the raw amino-acid sequence, 303 residues long: Acetaldehyde dehydrogenase (303 aa).

Cys131 (acyl-thioester intermediate) is an active-site residue. NAD(+) is bound by residues 162–170 and Asn273; that span reads SVGPGTRAN.

It belongs to the acetaldehyde dehydrogenase family.

It catalyses the reaction acetaldehyde + NAD(+) + CoA = acetyl-CoA + NADH + H(+). The sequence is that of Acetaldehyde dehydrogenase from Marinomonas sp. (strain MWYL1).